A 229-amino-acid polypeptide reads, in one-letter code: Ribose-5-phosphate isomerase A (229 aa).

Substrate contacts are provided by residues 28–31 (TGST), 85–88 (DGAD), and 98–101 (KGRG). The Proton acceptor role is filled by Glu107. Lys125 provides a ligand contact to substrate.

It belongs to the ribose 5-phosphate isomerase family. As to quaternary structure, homodimer.

The enzyme catalyses aldehydo-D-ribose 5-phosphate = D-ribulose 5-phosphate. It functions in the pathway carbohydrate degradation; pentose phosphate pathway; D-ribose 5-phosphate from D-ribulose 5-phosphate (non-oxidative stage): step 1/1. Its function is as follows. Catalyzes the reversible conversion of ribose-5-phosphate to ribulose 5-phosphate. The protein is Ribose-5-phosphate isomerase A of Pyrococcus furiosus (strain ATCC 43587 / DSM 3638 / JCM 8422 / Vc1).